The sequence spans 111 residues: Large ribosomal subunit protein uL22 (111 aa).

It belongs to the universal ribosomal protein uL22 family. As to quaternary structure, part of the 50S ribosomal subunit.

Its function is as follows. This protein binds specifically to 23S rRNA; its binding is stimulated by other ribosomal proteins, e.g. L4, L17, and L20. It is important during the early stages of 50S assembly. It makes multiple contacts with different domains of the 23S rRNA in the assembled 50S subunit and ribosome. The globular domain of the protein is located near the polypeptide exit tunnel on the outside of the subunit, while an extended beta-hairpin is found that lines the wall of the exit tunnel in the center of the 70S ribosome. The sequence is that of Large ribosomal subunit protein uL22 from Chlamydia muridarum (strain MoPn / Nigg).